A 335-amino-acid polypeptide reads, in one-letter code: 3-dehydroquinate synthase (335 aa).

NAD(+)-binding positions include 56-61 (DGEKYK), 90-94 (GVITD), 114-115 (TT), Lys127, Lys135, and 153-156 (FLKT). Positions 168, 227, and 243 each coordinate Zn(2+).

The protein belongs to the sugar phosphate cyclases superfamily. Dehydroquinate synthase family. NAD(+) serves as cofactor. The cofactor is Co(2+). It depends on Zn(2+) as a cofactor.

The protein resides in the cytoplasm. It catalyses the reaction 7-phospho-2-dehydro-3-deoxy-D-arabino-heptonate = 3-dehydroquinate + phosphate. It participates in metabolic intermediate biosynthesis; chorismate biosynthesis; chorismate from D-erythrose 4-phosphate and phosphoenolpyruvate: step 2/7. In terms of biological role, catalyzes the conversion of 3-deoxy-D-arabino-heptulosonate 7-phosphate (DAHP) to dehydroquinate (DHQ). In Pyrococcus furiosus (strain ATCC 43587 / DSM 3638 / JCM 8422 / Vc1), this protein is 3-dehydroquinate synthase.